A 148-amino-acid polypeptide reads, in one-letter code: Large ribosomal subunit protein bL9 (148 aa).

The protein belongs to the bacterial ribosomal protein bL9 family.

Binds to the 23S rRNA. The chain is Large ribosomal subunit protein bL9 from Parabacteroides distasonis (strain ATCC 8503 / DSM 20701 / CIP 104284 / JCM 5825 / NCTC 11152).